The following is a 484-amino-acid chain: MKKNFILNFATKNVKEKKLSFGVGITLWALIVFAYMIFVMNWGFASAGLNGKAGISGYLGHFFPNANEAPGTVVNQAVNWGITIGRGIGSVLVGWLIVKISHKYTVILSLFFMLFGIIAPYSPTYAGFIILRTIFAIGGTMQIILIQPVVSNYLNQRQKAVISQFSPFFYPIGTIITLIPFAGIIGQEAQKAFRDNWQIVFLVIGLLTLIPLIGYIILGTKFDLYPSNIEKRNKQEKLSLATFFKQKDTWYWTILYGSWLVAVVFPFTFSKPIFHRLIGDSDGTFNDKISVFLIFFLAGMFLGPFTIGLLSKYQLQRRKYISTIITLGVFFYVLATVVFVLKVGKNYEYAKSYTDGWTWLFLFLGLFMGICLWGIQGVMLNLPHEYKGSNPYRVGFQFGLIWGLGYTAFTIATIITSLVNTPPGIDLKKLELNNVDGYALGAYILIIIFSLVSSIGLALLKEPNPEYKKLLKIRSFSEIERIKK.

The next 12 helical transmembrane spans lie at 19 to 39 (LSFG…MIFV), 78 to 98 (VNWG…WLIV), 111 to 131 (FFML…FIIL), 134 to 154 (IFAI…SNYL), 165 to 185 (FSPF…AGII), 199 to 219 (IVFL…IILG), 249 to 269 (TWYW…PFTF), 289 to 309 (ISVF…TIGL), 321 to 341 (ISTI…VFVL), 360 to 380 (LFLF…GVML), 398 to 418 (FGLI…ITSL), and 440 to 460 (LGAY…LALL).

The protein resides in the cell membrane. This is an uncharacterized protein from Mesomycoplasma hyopneumoniae (strain 232) (Mycoplasma hyopneumoniae).